We begin with the raw amino-acid sequence, 116 residues long: Iron-sulfur cluster insertion protein ErpA (116 aa).

Iron-sulfur cluster contacts are provided by Cys44, Cys108, and Cys110.

Belongs to the HesB/IscA family. As to quaternary structure, homodimer. The cofactor is iron-sulfur cluster.

In terms of biological role, required for insertion of 4Fe-4S clusters for at least IspG. The chain is Iron-sulfur cluster insertion protein ErpA from Shewanella pealeana (strain ATCC 700345 / ANG-SQ1).